The sequence spans 458 residues: Exodeoxyribonuclease 7 large subunit (458 aa).

Belongs to the XseA family. Heterooligomer composed of large and small subunits.

Its subcellular location is the cytoplasm. The enzyme catalyses Exonucleolytic cleavage in either 5'- to 3'- or 3'- to 5'-direction to yield nucleoside 5'-phosphates.. Functionally, bidirectionally degrades single-stranded DNA into large acid-insoluble oligonucleotides, which are then degraded further into small acid-soluble oligonucleotides. This Escherichia coli O17:K52:H18 (strain UMN026 / ExPEC) protein is Exodeoxyribonuclease 7 large subunit.